Consider the following 406-residue polypeptide: Serine hydroxymethyltransferase (406 aa).

Residues Leu-111 and 115-117 (GHL) each bind (6S)-5,6,7,8-tetrahydrofolate. Lys-220 bears the N6-(pyridoxal phosphate)lysine mark.

This sequence belongs to the SHMT family. As to quaternary structure, homodimer. Requires pyridoxal 5'-phosphate as cofactor.

Its subcellular location is the cytoplasm. The enzyme catalyses (6R)-5,10-methylene-5,6,7,8-tetrahydrofolate + glycine + H2O = (6S)-5,6,7,8-tetrahydrofolate + L-serine. It participates in one-carbon metabolism; tetrahydrofolate interconversion. The protein operates within amino-acid biosynthesis; glycine biosynthesis; glycine from L-serine: step 1/1. Functionally, catalyzes the reversible interconversion of serine and glycine with tetrahydrofolate (THF) serving as the one-carbon carrier. This reaction serves as the major source of one-carbon groups required for the biosynthesis of purines, thymidylate, methionine, and other important biomolecules. Also exhibits THF-independent aldolase activity toward beta-hydroxyamino acids, producing glycine and aldehydes, via a retro-aldol mechanism. This Mycoplasma pneumoniae (strain ATCC 29342 / M129 / Subtype 1) (Mycoplasmoides pneumoniae) protein is Serine hydroxymethyltransferase.